Reading from the N-terminus, the 348-residue chain is MDPNGEHSPLGFLPCYKPPGATSRDLVNRAQRRLRGEFGLRKLKVGHTGTLDPLAEGLVLLAIGSAARLTPWVLQHGKRYLADFRLGVSSESGDLESELVTQTDVKLPTAAEIEQVLKDFHGVVEQTPPAHSAIKVDGERAHKRARRGEDFEMPKRRILIDSVKLISYEPPMMRLDVRCGSGTYLRTLGMDVAAACGCAAVMTKLIRNEVGRFTLDDTLDCAFMFDDDDREKMSSEPMVKYLRPAIEGLTHMPAMNLDRQQIGMLQAGIRISGTPEAPSEPLPEAWIGCIDQVDTFDRNTDVLDCIGVDRSDGSSGPWGELVAILRPHGKLWHPLRVFPTTESITLRG.

Aspartate 52 functions as the Nucleophile in the catalytic mechanism.

It belongs to the pseudouridine synthase TruB family. Type 1 subfamily.

The catalysed reaction is uridine(55) in tRNA = pseudouridine(55) in tRNA. Its function is as follows. Responsible for synthesis of pseudouridine from uracil-55 in the psi GC loop of transfer RNAs. The polypeptide is tRNA pseudouridine synthase B (Rhodopirellula baltica (strain DSM 10527 / NCIMB 13988 / SH1)).